A 521-amino-acid polypeptide reads, in one-letter code: Importin subunit alpha-3 (521 aa).

At Ala2 the chain carries N-acetylalanine. The IBB domain maps to 2–58 (ADNEKLDNQRLKNFKNKGRDLETMRRQRNEVVVELRKNKRDEHLLKRRNVPQEDICE). The Nuclear localization signal motif lies at 43 to 52 (EHLLKRRNVP). A Phosphoserine modification is found at Ser60. The stretch at 66-106 (YRVQNTSLEAIVQNASSDNQGIQLSAVQAARKLLSSDRNPP) is one ARM 1; truncated repeat. ARM repeat units follow at residues 107–149 (IDDL…TSEQ), 150–194 (TQAV…CRDY), 195–233 (VISL…HKDP), 234–278 (PPPM…EQIQ), 279–318 (MVID…TDEQ), 319–360 (TQVV…NQQQ), 361–400 (VQAV…ISGR), and 401–443 (KDQV…KMAE). The segment at 137–229 (WALTNIASGT…VTWVMVNLCR (93 aa)) is NLS binding site (major). The interval 306 to 394 (RAVGNIVTGT…QKEAAWAISN (89 aa)) is NLS binding site (minor). The ARM 10; atypical repeat unit spans residues 447–485 (ETIANLIEECGGLEKIEQLQNHENEDIYKLAYEIIDQFF).

The protein belongs to the importin alpha family. In terms of assembly, forms a complex with importin subunit beta-1 (KPNB1). Interacts with SNAI1. Interacts with TALDO1 isoform 1. Interacts with CYB1. As to expression, detected more or less in all tissues examined (Ehrlich ascites tumor cells, testis, kidney, spleen, liver, heart, lung, thymus, skeletal muscle, cerebellum and brain (without cerebellum)). Multiple-sized transcripts were highly expressed, especially in testis.

The protein resides in the cytoplasm. Its subcellular location is the nucleus. Functionally, functions in nuclear protein import as an adapter protein for nuclear receptor KPNB1. Binds specifically and directly to substrates containing either a simple or bipartite NLS motif. Docking of the importin/substrate complex to the nuclear pore complex (NPC) is mediated by KPNB1 through binding to nucleoporin FxFG repeats and the complex is subsequently translocated through the pore by an energy requiring, Ran-dependent mechanism. At the nucleoplasmic side of the NPC, Ran binds to importin-beta and the three components separate and importin-alpha and -beta are re-exported from the nucleus to the cytoplasm where GTP hydrolysis releases Ran from importin. The directionality of nuclear import is thought to be conferred by an asymmetric distribution of the GTP- and GDP-bound forms of Ran between the cytoplasm and nucleus. Mediates nuclear import of AARS1, MRTFA and RANBP3. The protein is Importin subunit alpha-3 (Kpna4) of Mus musculus (Mouse).